We begin with the raw amino-acid sequence, 707 residues long: Ribosomal RNA large subunit methyltransferase K/L (707 aa).

The region spanning 44-155 (VIYNLCLWSR…NDILTVSFDL (112 aa)) is the THUMP domain.

The protein belongs to the methyltransferase superfamily. RlmKL family.

It localises to the cytoplasm. The catalysed reaction is guanosine(2445) in 23S rRNA + S-adenosyl-L-methionine = N(2)-methylguanosine(2445) in 23S rRNA + S-adenosyl-L-homocysteine + H(+). It catalyses the reaction guanosine(2069) in 23S rRNA + S-adenosyl-L-methionine = N(2)-methylguanosine(2069) in 23S rRNA + S-adenosyl-L-homocysteine + H(+). Its function is as follows. Specifically methylates the guanine in position 2445 (m2G2445) and the guanine in position 2069 (m7G2069) of 23S rRNA. This chain is Ribosomal RNA large subunit methyltransferase K/L, found in Legionella pneumophila (strain Paris).